Here is a 166-residue protein sequence, read N- to C-terminus: Sec-independent protein translocase protein TatB (166 aa).

Residues 2 to 22 form a helical membrane-spanning segment; the sequence is FDGIGFMELLLIGVLGLVVLG. The tract at residues 69 to 166 is disordered; sequence SKGLSNLSPE…DTRSNPKANG (98 aa). Polar residues-rich tracts occupy residues 88 to 97 and 112 to 132; these read QAAQSVNRPY and QIYS…SQAN. Low complexity predominate over residues 133 to 153; that stretch reads PTATVEASPAPASPATPSEPS. Residues 155–166 show a composition bias toward polar residues; that stretch reads GADTRSNPKANG.

The protein belongs to the TatB family. In terms of assembly, the Tat system comprises two distinct complexes: a TatABC complex, containing multiple copies of TatA, TatB and TatC subunits, and a separate TatA complex, containing only TatA subunits. Substrates initially bind to the TatABC complex, which probably triggers association of the separate TatA complex to form the active translocon.

The protein localises to the cell inner membrane. In terms of biological role, part of the twin-arginine translocation (Tat) system that transports large folded proteins containing a characteristic twin-arginine motif in their signal peptide across membranes. Together with TatC, TatB is part of a receptor directly interacting with Tat signal peptides. TatB may form an oligomeric binding site that transiently accommodates folded Tat precursor proteins before their translocation. The polypeptide is Sec-independent protein translocase protein TatB (Shewanella baltica (strain OS155 / ATCC BAA-1091)).